The chain runs to 172 residues: AIG2-like protein C (172 aa).

Substrate is bound at residue 13–18 (YGSLQE). The active-site Proton acceptor is glutamate 81.

This sequence belongs to the gamma-glutamylcyclotransferase family. Expressed in flowers, leaves, stems and roots.

Its function is as follows. Putative gamma-glutamylcyclotransferase. This chain is AIG2-like protein C, found in Arabidopsis thaliana (Mouse-ear cress).